The sequence spans 299 residues: Putative KilA-N domain-containing protein R879 (299 aa).

Residues 1 to 75 enclose the KilA-N domain; the sequence is MKSDNGILMS…IKVSEIVLSY (75 aa). Residues 76-150 adopt a coiled-coil conformation; sequence HAKEAIKEKE…DKKINELLSK (75 aa).

This chain is Putative KilA-N domain-containing protein R879, found in Acanthamoeba polyphaga mimivirus (APMV).